Consider the following 162-residue polypeptide: MAFTFAAFCYMLTLVLCASLIFFIIWHIIAFDELRTDFKNPIEQGNPSRARERVKNVERICCLLRKLVVPEYCIHGLFCLMFMCAAEWVTLGLNIPLLFYHLWRYFHRPADGSEVMFDPVSIMNVDILNYCQKEAWCKLAFYLLSFFYYLYRVGATVRYVSA.

The Cytoplasmic segment spans residues 1–10 (MAFTFAAFCY). Residues 11–31 (MLTLVLCASLIFFIIWHIIAF) form a helical membrane-spanning segment. The Lumenal segment spans residues 32–72 (DELRTDFKNPIEQGNPSRARERVKNVERICCLLRKLVVPEY). Residues 73–93 (CIHGLFCLMFMCAAEWVTLGL) traverse the membrane as a helical segment. Residues 94–138 (NIPLLFYHLWRYFHRPADGSEVMFDPVSIMNVDILNYCQKEAWCK) are Cytoplasmic-facing. Residues 139–161 (LAFYLLSFFYYLYRVGATVRYVS) form a helical membrane-spanning segment. A topological domain (lumenal) is located at residue alanine 162.

It belongs to the cornichon family.

It is found in the membrane. In terms of biological role, regulates the trafficking and gating properties of AMPA-selective glutamate receptors (AMPARs). In Xenopus tropicalis (Western clawed frog), this protein is Protein cornichon homolog 2 (cnih2).